The chain runs to 77 residues: Large ribosomal subunit protein bL28 (77 aa).

Residues 1–20 (MSRVCQVTGKGPVTGNNISH) form a disordered region.

It belongs to the bacterial ribosomal protein bL28 family.

This is Large ribosomal subunit protein bL28 from Pseudomonas fluorescens (strain SBW25).